Here is an 88-residue protein sequence, read N- to C-terminus: RQC P-site tRNA stabilizing factor (88 aa).

Residues 1–67 (MRLDKFLKVS…VEITNVKETV (67 aa)) form the S4 RNA-binding domain.

This sequence belongs to the RqcP family. In terms of assembly, associates with stalled 50S ribosomal subunits. Binds to RqcH, 23S rRNA and the P-site tRNA. Does not require RqcH for association with 50S subunits.

Key component of the ribosome quality control system (RQC), a ribosome-associated complex that mediates the extraction of incompletely synthesized nascent chains from stalled ribosomes and their subsequent degradation. RqcH recruits Ala-charged tRNA, and with RqcP directs the elongation of stalled nascent chains on 50S ribosomal subunits, leading to non-templated C-terminal alanine extensions (Ala tail). The Ala tail promotes nascent chain degradation. RqcP is associated with the translocation-like movement of the peptidyl-tRNA from the A-site into the P-site. This is RQC P-site tRNA stabilizing factor from Halalkalibacterium halodurans (strain ATCC BAA-125 / DSM 18197 / FERM 7344 / JCM 9153 / C-125) (Bacillus halodurans).